The primary structure comprises 325 residues: Putative ankyrin repeat protein RF_0011 (325 aa).

ANK repeat units lie at residues 63–94 (NGNT…AINM), 99–130 (RGQP…NINA), and 134–164 (CGRT…EMII).

This chain is Putative ankyrin repeat protein RF_0011, found in Rickettsia felis (strain ATCC VR-1525 / URRWXCal2) (Rickettsia azadi).